The sequence spans 951 residues: Serine/threonine-protein phosphatase 4 regulatory subunit 1 (951 aa).

HEAT repeat units follow at residues 26 to 63, 82 to 119, 127 to 164, 168 to 206, 208 to 246, 248 to 285, and 287 to 324; these read ESDV…VFNR, RDCI…FCQE, AFSK…QELI, DVET…MVGK, ITER…VVGQ, ATEE…ATCQ, and IRRT…TFAN. Disordered regions lie at residues 326 to 395, 407 to 501, 539 to 569, and 592 to 612; these read SSSG…DMRV, SESP…MATR, HDEA…SISE, and GGAD…ERRP. Basic and acidic residues-rich tracts occupy residues 332-360, 464-483, and 539-551; these read FKDE…RPED, DLDK…ERTG, and HDEA…RSEL. An HEAT 8 repeat occupies 502–539; that stretch reads KELEEMIENLEPHMDDPDVKAQVEVLSAALRASTLDAH. Positions 594-604 are enriched in gly residues; that stretch reads ADVGPGGGGGF. HEAT repeat units follow at residues 699–735, 777–815, 820–858, and 862–899; these read LTAA…LLHI, RDVY…KLHM, TFGV…DDCL, and QFAV…EKEY. The residue at position 936 (serine 936) is a Phosphoserine.

Serine/threonine-protein phosphatase 4 (PP4) occurs in different assemblies of the catalytic and one or more regulatory subunits. Component of the PP4 complex PPP4C-PPP4R1. Interacts with HDAC3.

Its function is as follows. Regulatory subunit of serine/threonine-protein phosphatase 4. May play a role in regulation of cell division in renal glomeruli. The PPP4C-PPP4R1 PP4 complex may play a role in dephosphorylation and regulation of HDAC3. Plays a role in the inhibition of TNF-induced NF-kappa-B activation by regulating the dephosphorylation of TRAF2. In Rattus norvegicus (Rat), this protein is Serine/threonine-protein phosphatase 4 regulatory subunit 1 (Ppp4r1).